A 304-amino-acid polypeptide reads, in one-letter code: Ribonuclease Z (304 aa).

Residues H61, H63, D65, H66, H138, D206, and H265 each coordinate Zn(2+). D65 (proton acceptor) is an active-site residue.

Belongs to the RNase Z family. Homodimer. Requires Zn(2+) as cofactor.

The enzyme catalyses Endonucleolytic cleavage of RNA, removing extra 3' nucleotides from tRNA precursor, generating 3' termini of tRNAs. A 3'-hydroxy group is left at the tRNA terminus and a 5'-phosphoryl group is left at the trailer molecule.. Functionally, zinc phosphodiesterase, which displays some tRNA 3'-processing endonuclease activity. Probably involved in tRNA maturation, by removing a 3'-trailer from precursor tRNA. In Lachnoclostridium phytofermentans (strain ATCC 700394 / DSM 18823 / ISDg) (Clostridium phytofermentans), this protein is Ribonuclease Z.